Here is a 61-residue protein sequence, read N- to C-terminus: Sperm protamine P1 (61 aa).

A disordered region spans residues 1 to 61 (MARYRHSRSR…RYSRRRRRRY (61 aa)).

Belongs to the protamine P1 family. In terms of tissue distribution, testis.

Its subcellular location is the nucleus. It is found in the chromosome. In terms of biological role, protamines substitute for histones in the chromatin of sperm during the haploid phase of spermatogenesis. They compact sperm DNA into a highly condensed, stable and inactive complex. This is Sperm protamine P1 (PRM1) from Setonix brachyurus (Quokka).